The chain runs to 428 residues: Adenylosuccinate synthetase (428 aa).

Residues 12-18 and 40-42 each bind GTP; these read GDEGKGK and GHT. Residue Asp-13 is the Proton acceptor of the active site. Mg(2+) is bound by residues Asp-13 and Gly-40. IMP-binding positions include 13 to 16, 38 to 41, Thr-130, Arg-144, Gln-225, Thr-240, and Arg-304; these read DEGK and NAGH. Residue His-41 is the Proton donor of the active site. Position 300–306 (300–306) interacts with substrate; sequence VTTGRSR. Residues Arg-306, 332–334, and 414–416 contribute to the GTP site; these read KID and GVG.

The protein belongs to the adenylosuccinate synthetase family. Homodimer. Mg(2+) is required as a cofactor.

The protein resides in the cytoplasm. It catalyses the reaction IMP + L-aspartate + GTP = N(6)-(1,2-dicarboxyethyl)-AMP + GDP + phosphate + 2 H(+). It participates in purine metabolism; AMP biosynthesis via de novo pathway; AMP from IMP: step 1/2. Functionally, plays an important role in the de novo pathway of purine nucleotide biosynthesis. Catalyzes the first committed step in the biosynthesis of AMP from IMP. This chain is Adenylosuccinate synthetase, found in Clostridium botulinum (strain Eklund 17B / Type B).